The chain runs to 753 residues: Eukaryotic translation initiation factor 3 subunit B (753 aa).

Residues 42–129 enclose the RRM domain; it reads TMLVVDNIPI…NVLHVNRFGD (88 aa). WD repeat units lie at residues 142 to 185, 203 to 241, 321 to 362, 537 to 580, and 595 to 640; these read DLPS…WWNG, NSKW…GPIG, DTQS…LLDR, LDSK…DERR, and GEHY…LLHE. Positions 723-753 form a coiled coil; it reads KSKAKIDVKGQEARVEEWVEELIDETEELSM.

Belongs to the eIF-3 subunit B family. Component of the eukaryotic translation initiation factor 3 (eIF-3) complex.

Its subcellular location is the cytoplasm. In terms of biological role, RNA-binding component of the eukaryotic translation initiation factor 3 (eIF-3) complex, which is involved in protein synthesis of a specialized repertoire of mRNAs and, together with other initiation factors, stimulates binding of mRNA and methionyl-tRNAi to the 40S ribosome. The eIF-3 complex specifically targets and initiates translation of a subset of mRNAs involved in cell proliferation. This chain is Eukaryotic translation initiation factor 3 subunit B, found in Cryptococcus neoformans var. neoformans serotype D (strain B-3501A) (Filobasidiella neoformans).